Here is a 67-residue protein sequence, read N- to C-terminus: Cell division protein ZapB (67 aa).

Residues 3-59 (LELLSKLETKIQAALETIELLKMELEEEKQTSSSLSEQNQQLQQELTSWNEKVTGLV) adopt a coiled-coil conformation.

This sequence belongs to the ZapB family. Homodimer. The ends of the coiled-coil dimer bind to each other, forming polymers. Interacts with FtsZ.

The protein resides in the cytoplasm. Functionally, non-essential, abundant cell division factor that is required for proper Z-ring formation. It is recruited early to the divisome by direct interaction with FtsZ, stimulating Z-ring assembly and thereby promoting cell division earlier in the cell cycle. Its recruitment to the Z-ring requires functional FtsA or ZipA. The sequence is that of Cell division protein ZapB from Shewanella halifaxensis (strain HAW-EB4).